Here is a 469-residue protein sequence, read N- to C-terminus: Mitochondrial-processing peptidase subunit beta (469 aa).

Residue His-78 coordinates Zn(2+). Glu-81 acts as the Proton acceptor in catalysis. Positions 82 and 159 each coordinate Zn(2+).

It belongs to the peptidase M16 family. Heterodimer of alpha and beta subunits, forming the mitochondrial processing protease (MPP) in which subunit alpha is involved in substrate recognition and binding and subunit beta is the catalytic subunit. mppB is probably also part of the cytochrome bc1 complex as a core I protein in the mitochondrial inner membrane. Zn(2+) is required as a cofactor.

It is found in the mitochondrion inner membrane. The protein localises to the mitochondrion matrix. The catalysed reaction is Release of N-terminal transit peptides from precursor proteins imported into the mitochondrion, typically with Arg in position P2.. Binding to alpha subunit is required for catalytic activity. Its function is as follows. Catalytic subunit of the essential mitochondrial processing protease (MPP), which cleaves the mitochondrial sequence off newly imported precursors proteins. Preferentially, cleaves after an arginine at position P2. Plays an essential role in mitochondrial biogenesis. The protein is Mitochondrial-processing peptidase subunit beta (mppB) of Dictyostelium discoideum (Social amoeba).